The primary structure comprises 156 residues: MARKRKTPTRDVLADPVFNSKIITKLINTIMLDGKKSVAESILYNAFAIIKNKTNKEPIEVFTVAIENISPQLEVRSRRVGGSNYQVPCEVSAKRKQTLALRWLIQYARLRNEKTMEEKLAGEIIDASNKMGGAIKKREDTYKMAESNKAFAHFRW.

It belongs to the universal ribosomal protein uS7 family. In terms of assembly, part of the 30S ribosomal subunit. Contacts proteins S9 and S11.

Its function is as follows. One of the primary rRNA binding proteins, it binds directly to 16S rRNA where it nucleates assembly of the head domain of the 30S subunit. Is located at the subunit interface close to the decoding center, probably blocks exit of the E-site tRNA. The polypeptide is Small ribosomal subunit protein uS7 (Metamycoplasma arthritidis (strain 158L3-1) (Mycoplasma arthritidis)).